A 681-amino-acid chain; its full sequence is Methionine--tRNA ligase (681 aa).

Residues 27–37 (DYANGTPHIGH) carry the 'HIGH' region motif. The short motif at 316 to 320 (KMGKS) is the 'KMSKS' region element. Lys319 is an ATP binding site. A disordered region spans residues 522-571 (FPKPEPKADETKNAEAKPPKPQAKKEKKTVTDTAPAKTTEQKPEAAAPAQ). The span at 525–539 (PEPKADETKNAEAKP) shows a compositional bias: basic and acidic residues. Residues 580–681 (DFAKIDLRIA…LDLPSGTKVR (102 aa)) form the tRNA-binding domain.

The protein belongs to the class-I aminoacyl-tRNA synthetase family. MetG type 2B subfamily. As to quaternary structure, homodimer.

The protein resides in the cytoplasm. It catalyses the reaction tRNA(Met) + L-methionine + ATP = L-methionyl-tRNA(Met) + AMP + diphosphate. In terms of biological role, is required not only for elongation of protein synthesis but also for the initiation of all mRNA translation through initiator tRNA(fMet) aminoacylation. In Deinococcus radiodurans (strain ATCC 13939 / DSM 20539 / JCM 16871 / CCUG 27074 / LMG 4051 / NBRC 15346 / NCIMB 9279 / VKM B-1422 / R1), this protein is Methionine--tRNA ligase (metG).